A 252-amino-acid chain; its full sequence is Imidazole glycerol phosphate synthase subunit HisF (252 aa).

Catalysis depends on residues D11 and D130.

Belongs to the HisA/HisF family. In terms of assembly, heterodimer of HisH and HisF.

Its subcellular location is the cytoplasm. It carries out the reaction 5-[(5-phospho-1-deoxy-D-ribulos-1-ylimino)methylamino]-1-(5-phospho-beta-D-ribosyl)imidazole-4-carboxamide + L-glutamine = D-erythro-1-(imidazol-4-yl)glycerol 3-phosphate + 5-amino-1-(5-phospho-beta-D-ribosyl)imidazole-4-carboxamide + L-glutamate + H(+). Its pathway is amino-acid biosynthesis; L-histidine biosynthesis; L-histidine from 5-phospho-alpha-D-ribose 1-diphosphate: step 5/9. IGPS catalyzes the conversion of PRFAR and glutamine to IGP, AICAR and glutamate. The HisF subunit catalyzes the cyclization activity that produces IGP and AICAR from PRFAR using the ammonia provided by the HisH subunit. This chain is Imidazole glycerol phosphate synthase subunit HisF, found in Staphylococcus aureus (strain Mu3 / ATCC 700698).